The chain runs to 187 residues: Putative type I specificity subunit S.MpnORF289P N-terminus (187 aa).

Belongs to the type-I restriction system S methylase family. The methyltransferase is composed of M and S polypeptides.

Functionally, the N-terminal section of a specificity (S) subunit of a type I methyltransferase (MTase); this subunit dictates DNA sequence specificity. The single R subunit has multiple frameshifts and is probably not expressed. The sequence is that of Putative type I specificity subunit S.MpnORF289P N-terminus from Mycoplasma pneumoniae (strain ATCC 29342 / M129 / Subtype 1) (Mycoplasmoides pneumoniae).